We begin with the raw amino-acid sequence, 444 residues long: Exodeoxyribonuclease 7 large subunit (444 aa).

This sequence belongs to the XseA family. As to quaternary structure, heterooligomer composed of large and small subunits.

It is found in the cytoplasm. It catalyses the reaction Exonucleolytic cleavage in either 5'- to 3'- or 3'- to 5'-direction to yield nucleoside 5'-phosphates.. Bidirectionally degrades single-stranded DNA into large acid-insoluble oligonucleotides, which are then degraded further into small acid-soluble oligonucleotides. The protein is Exodeoxyribonuclease 7 large subunit of Pseudoalteromonas translucida (strain TAC 125).